Here is a 132-residue protein sequence, read N- to C-terminus: Chemokine-like protein TAFA-5 (132 aa).

A signal peptide spans 1–43 (MAPSPRTGSRQDATALPSMSSTFWAFMILASLLIAYCSQLAAG). N-linked (GlcNAc...) asparagine glycosylation occurs at Asn-113.

It belongs to the TAFA family.

Its subcellular location is the secreted. In terms of biological role, acts as a chemokine-like protein by regulating cell proliferation and migration through activation of G protein-coupled receptors (GPCRs), such as S1PR2 and FPR2. Stimulates chemotactic migration of macrophages mediated by the MAPK3/ERK1 and AKT1 pathway. Blocks TNFSF11/RANKL-induced osteoclast formation from macrophages by inhibiting up-regulation of osteoclast fusogenic and differentiation genes. Stimulation of macrophage migration and inhibition of osteoclast formation is mediated through the GPCR FPR2. Acts as an adipokine by negatively regulating vascular smooth muscle cell (VSMC) proliferation and migration in response to platelet-derived growth factor stimulation via GPCR S1PR2 and G protein GNA12/GNA13-transmitted RHOA signaling. Inhibits injury-induced cell proliferation and neointima formation in the femoral arteries. The polypeptide is Chemokine-like protein TAFA-5 (TAFA5) (Bos taurus (Bovine)).